Reading from the N-terminus, the 397-residue chain is Odorant receptor 59a (397 aa).

The Cytoplasmic segment spans residues 1-36; it reads MAEVRVDSLEFFKSHWTAWRYLGVAHFRVENWKNLY. The chain crosses the membrane as a helical span at residues 37-57; sequence VFYSIVSNLLVTLCYPVHLGI. Residues 58-68 lie on the Extracellular side of the membrane; it reads SLFRNRTITED. N62 carries an N-linked (GlcNAc...) asparagine glycan. A helical membrane pass occupies residues 69–92; it reads ILNLTTFATCTACSVKCLLYAYNI. Over 93-128 the chain is Cytoplasmic; it reads KDVLEMERLLRLLDERVVGPEQRSIYGQVRVQLRNV. The helical transmembrane segment at 129-149 threads the bilayer; it reads LYVFIGIYMPCALFAELSFLF. Topologically, residues 150-179 are extracellular; the sequence is KEERGLMYPAWFPFDWLHSTRNYYIANAYQ. Residues 180 to 200 form a helical membrane-spanning segment; it reads IVGISFQLLQNYVSDCFPAVV. At 201-274 the chain is on the cytoplasmic side; that stretch reads LCLISSHIKM…IEAFISLPML (74 aa). Residues 275–295 traverse the membrane as a helical segment; it reads IQFTVTALNVCIGLAALVFFV. Over 296 to 301 the chain is Extracellular; the sequence is SEPMAR. Residues 302-322 form a helical membrane-spanning segment; the sequence is MYFIFYSLAMPLQIFPSCFFG. The Cytoplasmic segment spans residues 323–372; sequence TDNEYWFGRLHYAAFSCNWHTQNRSFKRKMMLFVEQSLKKSTAVAGGMMR. A helical transmembrane segment spans residues 373 to 393; it reads IHLDTFFSTLKGAYSLFTIII. Residues 394-397 are Extracellular-facing; the sequence is RMRK.

This sequence belongs to the insect chemoreceptor superfamily. Heteromeric odorant receptor channel (TC 1.A.69) family. Or2a subfamily. In terms of assembly, interacts with Orco. Complexes exist early in the endomembrane system in olfactory sensory neurons (OSNs), coupling these complexes to the conserved ciliary trafficking pathway. As to expression, expressed in neurons of the third antennal segment.

The protein resides in the cell membrane. Its function is as follows. Odorant receptor which mediates acceptance or avoidance behavior, depending on its substrates. The odorant receptor repertoire encodes a large collection of odor stimuli that vary widely in identity, intensity, and duration. May form a complex with Orco to form odorant-sensing units, providing sensitive and prolonged odorant signaling and calcium permeability. Involved in the behavioral responses to ethyl acetate, anisole, hexanoic acid, and pyrazines. In Drosophila melanogaster (Fruit fly), this protein is Odorant receptor 59a (Or59a).